A 202-amino-acid polypeptide reads, in one-letter code: CASP-like protein 1U4 (202 aa).

Over 1–10 (MCLPAKWLHP) the chain is Cytoplasmic. A helical membrane pass occupies residues 11–31 (VSLIFRVAGIGLAAVSAAAML). Residues 32-56 (TASQCTVYADYGWRPRTVTYSDFPA) lie on the Extracellular side of the membrane. Residues 57–77 (FVYLVAATAIATLLEAVALFL) form a helical membrane-spanning segment. The Cytoplasmic segment spans residues 78 to 94 (SWSKKGKSKKSWRVLTM). Residues 95–115 (LLLGAVVPALLYTSAGAAFAV) traverse the membrane as a helical segment. At 116 to 146 (GWEDIYYYLEPIGRRFSVCRSSVAGGRFCEH) the chain is on the extracellular side. A helical membrane pass occupies residues 147–167 (VHVSMWLALGAAVAVSFAEFL). Over 168–202 (TTFRWCHGSGSCSDSDSDSDSDSESGCGHGCHCKH) the chain is Cytoplasmic.

The protein belongs to the Casparian strip membrane proteins (CASP) family. Homodimer and heterodimers.

The protein localises to the cell membrane. The polypeptide is CASP-like protein 1U4 (Sorghum bicolor (Sorghum)).